A 302-amino-acid polypeptide reads, in one-letter code: Probable 2-(5''-triphosphoribosyl)-3'-dephosphocoenzyme-A synthase (302 aa).

The protein belongs to the CitG/MdcB family.

It catalyses the reaction 3'-dephospho-CoA + ATP = 2'-(5''-triphospho-alpha-D-ribosyl)-3'-dephospho-CoA + adenine. The sequence is that of Probable 2-(5''-triphosphoribosyl)-3'-dephosphocoenzyme-A synthase from Citrobacter koseri (strain ATCC BAA-895 / CDC 4225-83 / SGSC4696).